We begin with the raw amino-acid sequence, 73 residues long: MKDHSFYHFALTARGRKDEKGELAEEIFDDLSFPKHEKDFHILSDYIETQGHYTISLSVFDDLYEEYTEWLKF.

The protein belongs to the UPF0346 family.

This chain is UPF0346 protein SSP1318, found in Staphylococcus saprophyticus subsp. saprophyticus (strain ATCC 15305 / DSM 20229 / NCIMB 8711 / NCTC 7292 / S-41).